The following is a 942-amino-acid chain: Homeobox protein 2 (942 aa).

Composition is skewed to low complexity over residues 32-87 (ECNE…NINE) and 98-130 (SPYS…SPIP). Disordered stretches follow at residues 32-149 (ECNE…PQNI), 161-494 (LESP…RLKK), 537-580 (RQEK…QGGA), and 609-942 (FKNN…CQQN). Residues 131–149 (NTNFKQSGEYQSIPSPQNI) are compositionally biased toward polar residues. Residues 163–261 (SPNSSNSSPS…PSSNLSKSNS (99 aa)) show a composition bias toward low complexity. Polar residues predominate over residues 269–290 (QAPSNTSSPQLLSPNHNQQRIS). Low complexity-rich tracts occupy residues 299-430 (NNNH…NSSP) and 450-464 (NNNN…SNSS). Over residues 465–481 (FDEYQPQQKVSRSNSPN) the composition is skewed to polar residues. Residues 485–544 (EKKRRTRLKKEQADILKTFFDNDDYPTKDDKETLANRLGMSYCAVTTWFSNKRQEKKRRG) constitute a DNA-binding region (homeobox). Composition is skewed to low complexity over residues 609–621 (FKNN…NKNV), 628–685 (NNNN…GSSD), 694–737 (NNNN…NNNN), 752–764 (NNNN…NNNN), 776–864 (SDDT…YLNN), and 890–927 (NNFN…NDNN). Residues 835–865 (NNNNNNNNQNNNNNNNNNQYNNNNKNYLNNI) adopt a coiled-coil conformation.

Its subcellular location is the nucleus. Putative transcription factor that may potentiate the function of warA. The protein is Homeobox protein 2 (hbx2) of Dictyostelium discoideum (Social amoeba).